Here is a 320-residue protein sequence, read N- to C-terminus: Malate dehydrogenase (320 aa).

Residues 10-15 (GSGMIG) and Asp34 each bind NAD(+). Residues Arg83 and Arg89 each contribute to the substrate site. Residues Asn96 and 119 to 121 (ITN) each bind NAD(+). Residues Asn121 and Arg152 each contribute to the substrate site. His176 serves as the catalytic Proton acceptor.

This sequence belongs to the LDH/MDH superfamily. MDH type 3 family.

It carries out the reaction (S)-malate + NAD(+) = oxaloacetate + NADH + H(+). Catalyzes the reversible oxidation of malate to oxaloacetate. The polypeptide is Malate dehydrogenase (Rhizobium rhizogenes (strain K84 / ATCC BAA-868) (Agrobacterium radiobacter)).